Consider the following 599-residue polypeptide: Proline--tRNA ligase (599 aa).

Belongs to the class-II aminoacyl-tRNA synthetase family. ProS type 1 subfamily. Homodimer.

It is found in the cytoplasm. It catalyses the reaction tRNA(Pro) + L-proline + ATP = L-prolyl-tRNA(Pro) + AMP + diphosphate. Functionally, catalyzes the attachment of proline to tRNA(Pro) in a two-step reaction: proline is first activated by ATP to form Pro-AMP and then transferred to the acceptor end of tRNA(Pro). As ProRS can inadvertently accommodate and process non-cognate amino acids such as alanine and cysteine, to avoid such errors it has two additional distinct editing activities against alanine. One activity is designated as 'pretransfer' editing and involves the tRNA(Pro)-independent hydrolysis of activated Ala-AMP. The other activity is designated 'posttransfer' editing and involves deacylation of mischarged Ala-tRNA(Pro). The misacylated Cys-tRNA(Pro) is not edited by ProRS. The protein is Proline--tRNA ligase of Prochlorococcus marinus (strain MIT 9313).